A 463-amino-acid polypeptide reads, in one-letter code: MENTLIKSIYRDTPAYLNQELQISGWVRTLRVSKSFGFIEINDGSFFKGIQVVFEEDLNNFEEIAKVATGSSLIIKGLLVESPGAKQPFELKAQSIMIEGACSGDYPLQKKRHSFEYLRTIAHLRPRTNTFAAVFRVRSLVAYAIHKFFQDKGFVYIHTPIITGSDAEGAGEMFRVTTLDLDALPRTEEGRIDYAKDFFGKETNLTVSGQLNAETYCMAFRNVYTFGPTFRAENSNTARHAAEFWMIEPEIAFADLQDDMELAEEMMKYLISYVLEHAPEEMAFFNEFVDKTLFDRLDNIVNSDFGRLTYTEAIEILQKEKERFEFPVEWGADLQTEHERFLTEQIFKKPVFVVDYPKDIKAFYMRLNDDQKTVAAMDLLVPGVGEIIGGSQREERLDYLEKRMAELGLHKEDYSWYLDLRKYGGTRHAGYGLGFERVIMYLTGISNIRDVVAFPRTVKNADF.

This sequence belongs to the class-II aminoacyl-tRNA synthetase family. As to quaternary structure, homodimer.

The protein resides in the cytoplasm. The enzyme catalyses tRNA(Asn) + L-asparagine + ATP = L-asparaginyl-tRNA(Asn) + AMP + diphosphate + H(+). The protein is Asparagine--tRNA ligase of Desulfitobacterium hafniense (strain Y51).